The sequence spans 1177 residues: Tyrosine-protein kinase hopscotch (1177 aa).

The interval 1–41 is disordered; the sequence is MALANGGEDRMDDSSSGRTSLADSASLTNSSLRSGTSSQSI. Residues 16–41 show a composition bias toward polar residues; it reads SGRTSLADSASLTNSSLRSGTSSQSI. Phosphoserine is present on residues Ser-40 and Ser-321. The region spanning 46-414 is the FERM domain; it reads GTIRVFNFTT…IYIRLSSKWM (369 aa). The region spanning 433–539 is the SH2; atypical domain; that stretch reads HCHGPIGGAY…YRIPASKYDK (107 aa). 2 consecutive Protein kinase domains span residues 582-843 and 892-1164; these read YPDS…AEIL and YNME…HPTD. Residues 898 to 906 and Lys-926 each bind ATP; that span reads IGRGHYGTV. The active-site Proton acceptor is Asp-1014. 2 positions are modified to phosphotyrosine; by autocatalysis: Tyr-1047 and Tyr-1048. The interval 1158-1177 is disordered; the sequence is KVTHPTDGHQSPPNQPTDAE.

This sequence belongs to the protein kinase superfamily. Tyr protein kinase family. JAK subfamily. Forms a complex with Hsp83 and piwi; probably Hop mediates the interaction between piwi and Hsp83.

The protein resides in the endomembrane system. It catalyses the reaction L-tyrosyl-[protein] + ATP = O-phospho-L-tyrosyl-[protein] + ADP + H(+). In terms of biological role, tyrosine kinase of the non-receptor type, phosphorylates the marelle protein. Required maternally for the establishment of the normal array of embryonic segments: involved in the control of pair-rule gene transcription in a stripe-specific manner. Together with Hsp83 and piwi, mediates canalization, also known as developmental robustness, likely via epigenetic silencing of existing genetic variants and suppression of transposon-induced new genetic variation. The protein is Tyrosine-protein kinase hopscotch (hop) of Drosophila melanogaster (Fruit fly).